Consider the following 303-residue polypeptide: Carboxypeptidase B (303 aa).

A Peptidase M14 domain is found at 5–298; sequence SYHDYDEINA…EGVKVVANFV (294 aa). Residues His63 and Glu66 each coordinate Zn(2+). Substrate-binding positions include 63 to 66, Arg118, and 136 to 137; these read HARE and NR. His189 contributes to the Zn(2+) binding site. Residues 190–191 and Tyr241 contribute to the substrate site; that span reads SY. Glu264 serves as the catalytic Proton donor/acceptor.

The protein belongs to the peptidase M14 family. Zn(2+) is required as a cofactor.

Its subcellular location is the secreted. The enzyme catalyses Preferential release of a C-terminal lysine or arginine amino acid.. This chain is Carboxypeptidase B, found in Astacus astacus (Noble crayfish).